A 353-amino-acid polypeptide reads, in one-letter code: Casein kinase II subunit alpha (353 aa).

In terms of domain architecture, Protein kinase spans 39-324 (YQLVRKLGRG…AREAMDHPYF (286 aa)). ATP contacts are provided by residues 45-53 (LGRGKYSEV) and Lys-68. Asp-156 acts as the Proton acceptor in catalysis. Residues 334 to 353 (MVSSNSPTPNALQGPISTTE) are disordered.

The protein belongs to the protein kinase superfamily. Ser/Thr protein kinase family. CK2 subfamily. As to quaternary structure, tetramer of two alpha and two beta chains.

The enzyme catalyses L-seryl-[protein] + ATP = O-phospho-L-seryl-[protein] + ADP + H(+). It carries out the reaction L-threonyl-[protein] + ATP = O-phospho-L-threonyl-[protein] + ADP + H(+). Functionally, casein kinases are operationally defined by their preferential utilization of acidic proteins such as caseins as substrates. The alpha chain contains the catalytic site. May participate in Wnt signaling. The sequence is that of Casein kinase II subunit alpha from Spodoptera frugiperda (Fall armyworm).